Here is a 113-residue protein sequence, read N- to C-terminus: MTISAQVIDTIVEWIDDNLHQPLRIDDIARHAGYSKWHLQRLFLQYKGESLGRYIRERKLLLAARDLRDTDQRVYDICLKYGFDSQQTFTRVFTRTFNQPPGAYRKENHSRAH.

The 99-residue stretch at 9 to 107 (DTIVEWIDDN…NQPPGAYRKE (99 aa)) folds into the HTH araC/xylS-type domain. DNA-binding regions (H-T-H motif) lie at residues 26-47 (DDIA…LQYK) and 74-97 (VYDI…TRTF).

Monomer. Interacts with the C-terminus of RNAP subunit RpoA when part of class I or class II promoter complexes. Also interacts with sigma-70/RpoD in class II promoter complexes.

Its function is as follows. Transcriptional regulator. Binds to regulatory regions of target genes, including its own gene, efflux pump operon acrAB, antisense RNA gene micF, and various genes involved in lipid A biosynthesis, including lpxO and lpxL-2. Regulates expression of many genes, perhaps including its own; activates various lipid A biosynthetic genes, and as a result of activating acrAB, confers multidrug resistance. Plays a role in virulence and survival in host cells. In Klebsiella pneumoniae subsp. pneumoniae (strain HS11286), this protein is Transcriptional regulator RamA.